The sequence spans 148 residues: uncharacterized protein (148 aa).

This is an uncharacterized protein from Acanthamoeba polyphaga mimivirus (APMV).